The sequence spans 825 residues: Exocyst complex component SEC10a (825 aa).

A coiled-coil region spans residues 244 to 266 (RGLEVAVANLQDYCNELENRLLS).

The protein belongs to the SEC10 family. In terms of assembly, the exocyst complex is composed of SEC3, SEC5, SEC6, SEC8, SEC10, EXO70A1 and EXO84B. Interacts with EXO84B. Binds to EXO70E2. Binds directly to B1L. Expressed in seedlings, roots, leaves and flowers.

It is found in the cytoplasm. It localises to the cytosol. Its subcellular location is the secreted. The protein resides in the extracellular exosome. Its function is as follows. Component of the exocyst complex involved in the docking of exocytic vesicles with fusion sites on the plasma membrane during regulated or polarized secretion. Involved in polarized cell growth and organ morphogenesis. During cytokinesis, involved in cell plate initiation, cell plate maturation and formation of new primary cell wall. The polypeptide is Exocyst complex component SEC10a (Arabidopsis thaliana (Mouse-ear cress)).